The primary structure comprises 707 residues: Ribosomal RNA large subunit methyltransferase K/L (707 aa).

A THUMP domain is found at 43–154 (QIYRCCLWSR…KDKAILGVDM (112 aa)).

The protein belongs to the methyltransferase superfamily. RlmKL family.

The protein resides in the cytoplasm. The catalysed reaction is guanosine(2445) in 23S rRNA + S-adenosyl-L-methionine = N(2)-methylguanosine(2445) in 23S rRNA + S-adenosyl-L-homocysteine + H(+). It carries out the reaction guanosine(2069) in 23S rRNA + S-adenosyl-L-methionine = N(2)-methylguanosine(2069) in 23S rRNA + S-adenosyl-L-homocysteine + H(+). Functionally, specifically methylates the guanine in position 2445 (m2G2445) and the guanine in position 2069 (m7G2069) of 23S rRNA. This is Ribosomal RNA large subunit methyltransferase K/L from Vibrio parahaemolyticus serotype O3:K6 (strain RIMD 2210633).